A 145-amino-acid polypeptide reads, in one-letter code: D-aminoacyl-tRNA deacylase (145 aa).

Residues Gly-137–Pro-138 carry the Gly-cisPro motif, important for rejection of L-amino acids motif.

It belongs to the DTD family. As to quaternary structure, homodimer.

The protein localises to the cytoplasm. It catalyses the reaction glycyl-tRNA(Ala) + H2O = tRNA(Ala) + glycine + H(+). It carries out the reaction a D-aminoacyl-tRNA + H2O = a tRNA + a D-alpha-amino acid + H(+). Functionally, an aminoacyl-tRNA editing enzyme that deacylates mischarged D-aminoacyl-tRNAs. Also deacylates mischarged glycyl-tRNA(Ala), protecting cells against glycine mischarging by AlaRS. Acts via tRNA-based rather than protein-based catalysis; rejects L-amino acids rather than detecting D-amino acids in the active site. By recycling D-aminoacyl-tRNA to D-amino acids and free tRNA molecules, this enzyme counteracts the toxicity associated with the formation of D-aminoacyl-tRNA entities in vivo and helps enforce protein L-homochirality. This Shewanella baltica (strain OS223) protein is D-aminoacyl-tRNA deacylase.